Reading from the N-terminus, the 509-residue chain is Cysteine--tRNA ligase (509 aa).

C19 is a binding site for Zn(2+). The short motif at 21 to 31 (PTVYNDAHIGH) is the 'HIGH' region element. Residues C213, H238, and E242 each coordinate Zn(2+). Residues 284 to 288 (KMSKS) carry the 'KMSKS' region motif. Residue K287 participates in ATP binding.

It belongs to the class-I aminoacyl-tRNA synthetase family. The cofactor is Zn(2+).

The catalysed reaction is tRNA(Cys) + L-cysteine + ATP = L-cysteinyl-tRNA(Cys) + AMP + diphosphate. The polypeptide is Cysteine--tRNA ligase (CARS) (Acanthamoeba polyphaga (Amoeba)).